Reading from the N-terminus, the 735-residue chain is Peroxisomal multifunctional enzyme type 2 (735 aa).

A (3R)-hydroxyacyl-CoA dehydrogenase region spans residues 1 to 305; it reads MASPLRFDGR…VEVLHKVDSE (305 aa). Residues 13-37, leucine 21, and aspartate 40 contribute to the NAD(+) site; that span reads LVTG…ALVI. Lysine 46 carries the post-translational modification N6-acetyllysine; alternate. Lysine 46 carries the N6-succinyllysine; alternate modification. A Phosphoserine modification is found at serine 52. Lysine 57 and lysine 68 each carry N6-succinyllysine. 75 to 76 provides a ligand contact to NAD(+); it reads SV. Lysine 84 is subject to N6-succinyllysine. Asparagine 99 contributes to the NAD(+) binding site. Substrate is bound at residue serine 151. The active-site Proton acceptor is the tyrosine 164. Residues 164–168 and 196–199 each bind NAD(+); these read YSAAK and AGSR. Threonine 265 carries the phosphothreonine modification. Lysine 275 carries the post-translational modification N6-succinyllysine. A phosphoserine mark is found at serine 304 and serine 308. The tract at residues 321 to 621 is enoyl-CoA hydratase 2; sequence SGFVGAVGHK…TQTPSEGGEL (301 aa). Lysine 355 carries the post-translational modification N6-succinyllysine. A (3R)-3-hydroxydecanoyl-CoA-binding site is contributed by 405–406; it reads HG. Lysine 423 is subject to N6-succinyllysine. (3R)-3-hydroxydecanoyl-CoA is bound by residues lysine 434, 509-514, glycine 532, and phenylalanine 562; that span reads DWNPLH. The 117-residue stretch at 483 to 599 folds into the MaoC-like domain; the sequence is VPNRPPDAVL…HETGDVVISN (117 aa). Lysine 564 is subject to N6-acetyllysine. N6-succinyllysine occurs at positions 578 and 662. The SCP2 domain occupies 623–735; that stretch reads SALVFGEIGR…QMILKDYAKL (113 aa). Lysine 668 is subject to N6-acetyllysine. Residue glutamine 705 coordinates substrate. Position 706 is an N6-acetyllysine (lysine 706). Residue glutamine 723 participates in substrate binding. At lysine 724 the chain carries N6-succinyllysine. Residues 733–735 carry the Microbody targeting signal motif; the sequence is AKL.

This sequence belongs to the short-chain dehydrogenases/reductases (SDR) family. In terms of assembly, homodimer. In terms of tissue distribution, present in many tissues with highest concentrations in liver and kidney.

It localises to the peroxisome. It catalyses the reaction a (3R)-3-hydroxyacyl-CoA + NAD(+) = a 3-oxoacyl-CoA + NADH + H(+). The catalysed reaction is (24R,25R)-3alpha,7alpha,12alpha,24-tetrahydroxy-5beta-cholestan-26-oyl-CoA = (24E)-3alpha,7alpha,12alpha-trihydroxy-5beta-cholest-24-en-26-oyl-CoA + H2O. It carries out the reaction a (3R)-3-hydroxyacyl-CoA = a (2E)-enoyl-CoA + H2O. The enzyme catalyses (2E)-octenoyl-CoA + H2O = (3R)-hydroxyoctanoyl-CoA. It catalyses the reaction (3R)-hydroxyoctanoyl-CoA + NAD(+) = 3-oxooctanoyl-CoA + NADH + H(+). The catalysed reaction is (3R)-hydroxyhexadecanoyl-CoA + NAD(+) = 3-oxohexadecanoyl-CoA + NADH + H(+). It carries out the reaction (2E)-hexadecenedioyl-CoA + H2O = (3R)-hydroxyhexadecanedioyl-CoA. The enzyme catalyses (3R)-hydroxyhexadecanedioyl-CoA + NAD(+) = 3-oxohexadecanedioyl-CoA + NADH + H(+). It catalyses the reaction (3R)-hydroxyhexadecanoyl-CoA = (2E)-hexadecenoyl-CoA + H2O. The catalysed reaction is (3R)-3-hydroxydecanoyl-CoA = (2E)-decenoyl-CoA + H2O. It carries out the reaction (3R)-3-hydroxydecanoyl-CoA + NAD(+) = 3-oxodecanoyl-CoA + NADH + H(+). The enzyme catalyses (24R,25R)-3alpha,7alpha,12alpha,24-tetrahydroxy-5beta-cholestan-26-oyl-CoA + NAD(+) = 3alpha,7alpha,12alpha-trihydroxy-24-oxo-5beta-cholestan-26-oyl-CoA + NADH + H(+). It functions in the pathway lipid metabolism; fatty acid beta-oxidation. Functionally, bifunctional enzyme acting on the peroxisomal fatty acid beta-oxidation pathway. Catalyzes two of the four reactions in fatty acid degradation: hydration of 2-enoyl-CoA (trans-2-enoyl-CoA) to produce (3R)-3-hydroxyacyl-CoA, and dehydrogenation of (3R)-3-hydroxyacyl-CoA to produce 3-ketoacyl-CoA (3-oxoacyl-CoA), which is further metabolized by SCPx. Can use straight-chain and branched-chain fatty acids, as well as bile acid intermediates as substrates. The chain is Peroxisomal multifunctional enzyme type 2 from Mus musculus (Mouse).